Here is a 286-residue protein sequence, read N- to C-terminus: Bifunctional protein FolD (286 aa).

NADP(+) is bound by residues G165 to S167 and S190.

Belongs to the tetrahydrofolate dehydrogenase/cyclohydrolase family. As to quaternary structure, homodimer.

The enzyme catalyses (6R)-5,10-methylene-5,6,7,8-tetrahydrofolate + NADP(+) = (6R)-5,10-methenyltetrahydrofolate + NADPH. It carries out the reaction (6R)-5,10-methenyltetrahydrofolate + H2O = (6R)-10-formyltetrahydrofolate + H(+). It functions in the pathway one-carbon metabolism; tetrahydrofolate interconversion. Its function is as follows. Catalyzes the oxidation of 5,10-methylenetetrahydrofolate to 5,10-methenyltetrahydrofolate and then the hydrolysis of 5,10-methenyltetrahydrofolate to 10-formyltetrahydrofolate. In Staphylococcus aureus (strain bovine RF122 / ET3-1), this protein is Bifunctional protein FolD.